A 298-amino-acid polypeptide reads, in one-letter code: N-acetylmuramic acid 6-phosphate etherase (298 aa).

Positions 55–218 (IHTQVSGGGR…STGLMIKSGK (164 aa)) constitute an SIS domain. E83 functions as the Proton donor in the catalytic mechanism. Residue E114 is part of the active site.

The protein belongs to the GCKR-like family. MurNAc-6-P etherase subfamily. Homodimer.

It catalyses the reaction N-acetyl-D-muramate 6-phosphate + H2O = N-acetyl-D-glucosamine 6-phosphate + (R)-lactate. The protein operates within amino-sugar metabolism; 1,6-anhydro-N-acetylmuramate degradation. Its pathway is amino-sugar metabolism; N-acetylmuramate degradation. It functions in the pathway cell wall biogenesis; peptidoglycan recycling. Its function is as follows. Specifically catalyzes the cleavage of the D-lactyl ether substituent of MurNAc 6-phosphate, producing GlcNAc 6-phosphate and D-lactate. Together with AnmK, is also required for the utilization of anhydro-N-acetylmuramic acid (anhMurNAc) either imported from the medium or derived from its own cell wall murein, and thus plays a role in cell wall recycling. This is N-acetylmuramic acid 6-phosphate etherase from Escherichia coli O6:K15:H31 (strain 536 / UPEC).